Consider the following 1099-residue polypeptide: Contactin-5 (1099 aa).

The N-terminal stretch at 1 to 18 (MASSWRLILFLSFTSCLS) is a signal peptide. 6 consecutive Ig-like C2-type domains span residues 99 to 190 (PVFV…ATLQ), 196 to 282 (NFSG…RVLS), 300 to 385 (PKIE…GQLQ), 390 to 474 (PHWV…AELK), 480 to 569 (PSFE…VSVK), and 571 to 660 (PTRI…DSVS). A disulfide bond links Cys123 and Cys173. Residues Asn138 and Asn196 are each glycosylated (N-linked (GlcNAc...) asparagine). Intrachain disulfides connect Cys217/Cys269 and Cys322/Cys369. Asn397, Asn449, and Asn540 each carry an N-linked (GlcNAc...) asparagine glycan. Intrachain disulfides connect Cys411-Cys458, Cys503-Cys551, and Cys593-Cys650. Fibronectin type-III domains are found at residues 673 to 771 (PPGV…TNEA), 776 to 873 (APSN…SAEG), 878 to 972 (APTD…TKRH), and 977 to 1067 (PPGN…SYAG). N-linked (GlcNAc...) asparagine glycans are attached at residues Asn779, Asn816, and Asn931. Residues 958–983 (YGPPSREVSATTKRHPPSEPPGNLRW) are disordered. N-linked (GlcNAc...) asparagine glycosylation occurs at Asn1002. Ser1072 carries GPI-anchor amidated serine lipidation. The propeptide at 1073-1099 (AQSTLHSLSKWSSVTLLLALMLPSSSW) is removed in mature form.

It belongs to the immunoglobulin superfamily. Contactin family. Interacts with PTPRG. Specifically expressed in the nervous system. Expressed in cerebrum and cerebellum but at low level in spinal cord. In brain, it is expressed in highly restricted regions at postnatal day 7, such as the auditory pathway, including the cochlear nucleus, superior olive, inferior colliculus, medial geniculate nucleus and auditory cortex. Expressed in the accessory olfactory bulb, glomerular and mitral cell layers in the olfactory bulb, anterior thalamic nuclei, layers II-IV of the cerebral cortex, dentate gyrus of the hippocampus and external granule cells and Purkinje cells of the cerebellum. Also expressed in the piriform cortex, inferior olive and facial nucleus. Weakly or not expressed in other parts of the brain.

The protein localises to the cell membrane. In terms of biological role, contactins mediate cell surface interactions during nervous system development. Has some neurite outgrowth-promoting activity in the cerebral cortical neurons but not in hippocampal neurons. Probably involved in neuronal activity in the auditory system. The sequence is that of Contactin-5 (Cntn5) from Rattus norvegicus (Rat).